Consider the following 574-residue polypeptide: Proline--tRNA ligase (574 aa).

Belongs to the class-II aminoacyl-tRNA synthetase family. ProS type 1 subfamily. In terms of assembly, homodimer.

Its subcellular location is the cytoplasm. It catalyses the reaction tRNA(Pro) + L-proline + ATP = L-prolyl-tRNA(Pro) + AMP + diphosphate. Its function is as follows. Catalyzes the attachment of proline to tRNA(Pro) in a two-step reaction: proline is first activated by ATP to form Pro-AMP and then transferred to the acceptor end of tRNA(Pro). As ProRS can inadvertently accommodate and process non-cognate amino acids such as alanine and cysteine, to avoid such errors it has two additional distinct editing activities against alanine. One activity is designated as 'pretransfer' editing and involves the tRNA(Pro)-independent hydrolysis of activated Ala-AMP. The other activity is designated 'posttransfer' editing and involves deacylation of mischarged Ala-tRNA(Pro). The misacylated Cys-tRNA(Pro) is not edited by ProRS. The polypeptide is Proline--tRNA ligase (Hahella chejuensis (strain KCTC 2396)).